We begin with the raw amino-acid sequence, 145 residues long: Methyl-coenzyme M reductase I operon protein D (145 aa).

In terms of assembly, MCR is composed of three subunits: alpha, beta, and gamma. The function of proteins C and D is not known.

This chain is Methyl-coenzyme M reductase I operon protein D (mcrD), found in Methanothermobacter thermautotrophicus (strain ATCC 29096 / DSM 1053 / JCM 10044 / NBRC 100330 / Delta H) (Methanobacterium thermoautotrophicum).